The chain runs to 193 residues: Bcl-2-binding component 3 (193 aa).

Disordered stretches follow at residues 1–31 and 71–131; these read MARA…GRLM and ALGG…VEEE. Serine 10 carries the post-translational modification Phosphoserine. The BH3 motif lies at 137 to 151; that stretch reads IGAQLRRMADDLNAQ.

This sequence belongs to the Bcl-2 family. Interacts with MCL1 and BCL2A1. Interacts with BCL2 and BCL2L1/BCL-XL. Interacts (via BH3 domain) with NOL3 (via CARD domain); this interaction prevents BBC3 association with BCL2 and results in CASP8 activation.

Its subcellular location is the mitochondrion. In terms of biological role, essential mediator of p53/TP53-dependent and p53/TP53-independent apoptosis. Promotes partial unfolding of BCL2L1 and dissociation of BCL2L1 from p53/TP53, releasing the bound p53/TP53 to induce apoptosis. Regulates ER stress-induced neuronal apoptosis. The chain is Bcl-2-binding component 3 (Bbc3) from Mus musculus (Mouse).